A 318-amino-acid polypeptide reads, in one-letter code: Mitochondrial coenzyme A transporter SLC25A42 (318 aa).

3 Solcar repeats span residues 31-117, 129-214, and 224-312; these read RQVL…YKRI, LPPW…LKSL, and PYPF…MQIL. 6 helical membrane-spanning segments follow: residues 33-53, 89-109, 135-155, 186-206, 230-250, and 293-313; these read VLSSLLSGALAGALAKTAVAP, LWRGNSATMVRVVPYAAIQFS, LFAGALAGTTAASLTYPLDLV, LYHGFMPTVLGVIPYAGLSFF, MIFGACAGLIGQSASYPLDVV, and VKGPIAVGISFTTFDLMQILL.

Belongs to the mitochondrial carrier (TC 2.A.29) family.

The protein resides in the mitochondrion inner membrane. The enzyme catalyses ADP(out) + CoA(in) = ADP(in) + CoA(out). It catalyses the reaction 3'-dephospho-CoA(in) + ADP(out) = 3'-dephospho-CoA(out) + ADP(in). It carries out the reaction adenosine 3',5'-bisphosphate(in) + ADP(out) = adenosine 3',5'-bisphosphate(out) + ADP(in). The catalysed reaction is AMP(in) + ADP(out) = AMP(out) + ADP(in). The enzyme catalyses dADP(in) + ADP(out) = dADP(out) + ADP(in). It catalyses the reaction ADP(in) + ATP(out) = ADP(out) + ATP(in). In terms of biological role, mitochondrial carrier mediating the transport of coenzyme A (CoA) in mitochondria in exchange for intramitochondrial (deoxy)adenine nucleotides and adenosine 3',5'-diphosphate. In Homo sapiens (Human), this protein is Mitochondrial coenzyme A transporter SLC25A42 (SLC25A42).